The following is a 388-amino-acid chain: Probable pectin lyase F-1 (388 aa).

An N-terminal signal peptide occupies residues methionine 1–alanine 19. The cysteines at positions 80 and 103 are disulfide-linked. Asparagine 126 carries an N-linked (GlcNAc...) asparagine glycan. Arginine 253 is a catalytic residue. The cysteines at positions 328 and 336 are disulfide-linked.

This sequence belongs to the polysaccharide lyase 1 family.

It is found in the secreted. It carries out the reaction Eliminative cleavage of (1-&gt;4)-alpha-D-galacturonan methyl ester to give oligosaccharides with 4-deoxy-6-O-methyl-alpha-D-galact-4-enuronosyl groups at their non-reducing ends.. In terms of biological role, pectinolytic enzymes consist of four classes of enzymes: pectin lyase, polygalacturonase, pectin methylesterase and rhamnogalacturonase. Among pectinolytic enzymes, pectin lyase is the most important in depolymerization of pectin, since it cleaves internal glycosidic bonds of highly methylated pectins. This Aspergillus terreus (strain NIH 2624 / FGSC A1156) protein is Probable pectin lyase F-1 (pelF-1).